Here is a 578-residue protein sequence, read N- to C-terminus: L-ascorbate oxidase (578 aa).

The signal sequence occupies residues 1-28 (MASLGFLFFFLLPLILLELSSSRSVMAA). Plastocyanin-like domains lie at 30 to 149 (TRHF…LIVE) and 161 to 328 (DGEF…NYLP). Cu cation-binding residues include H87, H89, H131, and H133. Cystine bridges form between C108–C565 and C207–C221. Residue N206 is glycosylated (N-linked (GlcNAc...) asparagine). N-linked (GlcNAc...) asparagine glycosylation is found at N349, N394, N438, and N451. The 179-residue stretch at 372-550 (HRRIILLNTQ…HMGMGVIFAE (179 aa)) folds into the Plastocyanin-like 3 domain. Residues H472, H475, H477, H533, C534, H535, H539, and M544 each coordinate Cu cation.

Belongs to the multicopper oxidase family. Dimer. The cofactor is Cu cation. As to expression, highly expressed in young and growing tissues.

It is found in the secreted. The enzyme catalyses 4 L-ascorbate + O2 = 4 monodehydro-L-ascorbate radical + 2 H2O. Its function is as follows. May be involved in a redox system involving ascorbic acid. In Nicotiana tabacum (Common tobacco), this protein is L-ascorbate oxidase (AAO).